The following is a 101-amino-acid chain: Urease subunit beta (101 aa).

This sequence belongs to the urease beta subunit family. Heterotrimer of UreA (gamma), UreB (beta) and UreC (alpha) subunits. Three heterotrimers associate to form the active enzyme.

Its subcellular location is the cytoplasm. It carries out the reaction urea + 2 H2O + H(+) = hydrogencarbonate + 2 NH4(+). It participates in nitrogen metabolism; urea degradation; CO(2) and NH(3) from urea (urease route): step 1/1. The chain is Urease subunit beta from Dechloromonas aromatica (strain RCB).